The chain runs to 124 residues: Large ribosomal subunit protein bL36m (124 aa).

The protein belongs to the bacterial ribosomal protein bL36 family. As to quaternary structure, component of the mitochondrial large ribosomal subunit (mt-LSU). Mature N.crassa 74S mitochondrial ribosomes consist of a small (37S) and a large (54S) subunit. The 37S small subunit contains a 16S ribosomal RNA (16S mt-rRNA) and 32 different proteins. The 54S large subunit contains a 23S rRNA (23S mt-rRNA) and 42 different proteins. bL36m has a zinc binding site.

Its subcellular location is the mitochondrion. In terms of biological role, component of the mitochondrial ribosome (mitoribosome), a dedicated translation machinery responsible for the synthesis of mitochondrial genome-encoded proteins, including at least some of the essential transmembrane subunits of the mitochondrial respiratory chain. The mitoribosomes are attached to the mitochondrial inner membrane and translation products are cotranslationally integrated into the membrane. The protein is Large ribosomal subunit protein bL36m (rtc6) of Neurospora crassa (strain ATCC 24698 / 74-OR23-1A / CBS 708.71 / DSM 1257 / FGSC 987).